A 210-amino-acid chain; its full sequence is Urease accessory protein UreE (210 aa).

Positions 136-210 are disordered; it reads PEGGAYAEPS…HGHSHAHDHK (75 aa). 2 stretches are compositionally biased toward basic and acidic residues: residues 145–169 and 178–196; these read SHAH…TSHD and HDHD…EHCG. Positions 197-210 are enriched in basic residues; it reads HDHHHGHSHAHDHK.

This sequence belongs to the UreE family.

Its subcellular location is the cytoplasm. Functionally, involved in urease metallocenter assembly. Binds nickel. Probably functions as a nickel donor during metallocenter assembly. The chain is Urease accessory protein UreE from Bradyrhizobium sp. (strain ORS 278).